A 133-amino-acid polypeptide reads, in one-letter code: Small ribosomal subunit protein uS8 (133 aa).

It belongs to the universal ribosomal protein uS8 family. As to quaternary structure, part of the 30S ribosomal subunit. Contacts proteins S5 and S12.

One of the primary rRNA binding proteins, it binds directly to 16S rRNA central domain where it helps coordinate assembly of the platform of the 30S subunit. The chain is Small ribosomal subunit protein uS8 from Prochlorococcus marinus (strain AS9601).